The following is a 124-amino-acid chain: Small ribosomal subunit protein uS12 (124 aa).

Position 89 is a 3-methylthioaspartic acid (Asp-89).

This sequence belongs to the universal ribosomal protein uS12 family. In terms of assembly, part of the 30S ribosomal subunit. Contacts proteins S8 and S17. May interact with IF1 in the 30S initiation complex.

In terms of biological role, with S4 and S5 plays an important role in translational accuracy. Its function is as follows. Interacts with and stabilizes bases of the 16S rRNA that are involved in tRNA selection in the A site and with the mRNA backbone. Located at the interface of the 30S and 50S subunits, it traverses the body of the 30S subunit contacting proteins on the other side and probably holding the rRNA structure together. The combined cluster of proteins S8, S12 and S17 appears to hold together the shoulder and platform of the 30S subunit. This is Small ribosomal subunit protein uS12 from Sodalis glossinidius (strain morsitans).